A 353-amino-acid chain; its full sequence is Phosphate acyltransferase (353 aa).

Belongs to the PlsX family. In terms of assembly, homodimer. Probably interacts with PlsY.

Its subcellular location is the cytoplasm. It catalyses the reaction a fatty acyl-[ACP] + phosphate = an acyl phosphate + holo-[ACP]. The protein operates within lipid metabolism; phospholipid metabolism. Its function is as follows. Catalyzes the reversible formation of acyl-phosphate (acyl-PO(4)) from acyl-[acyl-carrier-protein] (acyl-ACP). This enzyme utilizes acyl-ACP as fatty acyl donor, but not acyl-CoA. This Rhodopseudomonas palustris (strain BisB5) protein is Phosphate acyltransferase.